The sequence spans 172 residues: 3-hydroxydecanoyl-[acyl-carrier-protein] dehydratase (172 aa).

Residue His71 is part of the active site.

The protein belongs to the thioester dehydratase family. FabA subfamily. In terms of assembly, homodimer.

The protein resides in the cytoplasm. The enzyme catalyses a (3R)-hydroxyacyl-[ACP] = a (2E)-enoyl-[ACP] + H2O. The catalysed reaction is (3R)-hydroxydecanoyl-[ACP] = (2E)-decenoyl-[ACP] + H2O. It catalyses the reaction (2E)-decenoyl-[ACP] = (3Z)-decenoyl-[ACP]. It functions in the pathway lipid metabolism; fatty acid biosynthesis. Necessary for the introduction of cis unsaturation into fatty acids. Catalyzes the dehydration of (3R)-3-hydroxydecanoyl-ACP to E-(2)-decenoyl-ACP and then its isomerization to Z-(3)-decenoyl-ACP. Can catalyze the dehydratase reaction for beta-hydroxyacyl-ACPs with saturated chain lengths up to 16:0, being most active on intermediate chain length. The protein is 3-hydroxydecanoyl-[acyl-carrier-protein] dehydratase of Brucella anthropi (strain ATCC 49188 / DSM 6882 / CCUG 24695 / JCM 21032 / LMG 3331 / NBRC 15819 / NCTC 12168 / Alc 37) (Ochrobactrum anthropi).